The following is a 376-amino-acid chain: Queuine tRNA-ribosyltransferase (376 aa).

Asp-89 functions as the Proton acceptor in the catalytic mechanism. Substrate contacts are provided by residues 89 to 93, Asp-143, Gln-187, and Gly-214; that span reads DSGGF. Residues 245 to 251 form an RNA binding region; that stretch reads GVGKPQD. Catalysis depends on Asp-264, which acts as the Nucleophile. Residues 269–273 form an RNA binding; important for wobble base 34 recognition region; that stretch reads TRNAR. Residues Cys-302, Cys-304, Cys-307, and His-333 each contribute to the Zn(2+) site.

Belongs to the queuine tRNA-ribosyltransferase family. In terms of assembly, homodimer. Within each dimer, one monomer is responsible for RNA recognition and catalysis, while the other monomer binds to the replacement base PreQ1. Requires Zn(2+) as cofactor.

The catalysed reaction is 7-aminomethyl-7-carbaguanine + guanosine(34) in tRNA = 7-aminomethyl-7-carbaguanosine(34) in tRNA + guanine. It functions in the pathway tRNA modification; tRNA-queuosine biosynthesis. Its function is as follows. Catalyzes the base-exchange of a guanine (G) residue with the queuine precursor 7-aminomethyl-7-deazaguanine (PreQ1) at position 34 (anticodon wobble position) in tRNAs with GU(N) anticodons (tRNA-Asp, -Asn, -His and -Tyr). Catalysis occurs through a double-displacement mechanism. The nucleophile active site attacks the C1' of nucleotide 34 to detach the guanine base from the RNA, forming a covalent enzyme-RNA intermediate. The proton acceptor active site deprotonates the incoming PreQ1, allowing a nucleophilic attack on the C1' of the ribose to form the product. After dissociation, two additional enzymatic reactions on the tRNA convert PreQ1 to queuine (Q), resulting in the hypermodified nucleoside queuosine (7-(((4,5-cis-dihydroxy-2-cyclopenten-1-yl)amino)methyl)-7-deazaguanosine). This Erwinia tasmaniensis (strain DSM 17950 / CFBP 7177 / CIP 109463 / NCPPB 4357 / Et1/99) protein is Queuine tRNA-ribosyltransferase.